A 293-amino-acid polypeptide reads, in one-letter code: MTDQLRLMAVHAHPDDESSKGAATMAKYVSEGVDVLVVTCTGGERGSILNPKLQGDAYIEENIHEVRRKEMDEAREILGVGQEWLGFVDSGLPEGDPLPPLPEGCFALEDVDKAAGELVRKIRSFRPQVITTYDENGGYPHPDHIMTHKITMVAFEGAADTEKYPESEYGTAYQPLKVYYNQGFNRPRTEALHHALLDRGLESPYEDWLKRWSEFERKERTLTTHVPCADFFEIRDKALIAHATQIDPEGGWFRVPMEIQKEVWPTEEYELAKSLVETSLPEDDLFAGIRDNA.

Zn(2+)-binding residues include His13, Asp16, and His144.

It belongs to the MshB deacetylase family. Mca subfamily. As to quaternary structure, monomer. Requires Zn(2+) as cofactor.

It carries out the reaction mycothiol S-conjugate + H2O = an N-acetyl-L-cysteine-S-conjugate + 1D-myo-inositol 2-amino-2-deoxy-alpha-D-glucopyranoside. In terms of biological role, a mycothiol (MSH, N-acetylcysteinyl-glucosaminyl-inositol) S-conjugate amidase, it recycles conjugated MSH to the N-acetyl cysteine conjugate (AcCys S-conjugate, a mercapturic acid) and the MSH precursor. Involved in MSH-dependent detoxification of a number of alkylating agents and antibiotics. The polypeptide is Mycothiol S-conjugate amidase (Streptomyces coelicolor (strain ATCC BAA-471 / A3(2) / M145)).